Consider the following 418-residue polypeptide: Tyrosine--tRNA ligase 1 (418 aa).

Tyr-34 provides a ligand contact to L-tyrosine. A 'HIGH' region motif is present at residues 39–48 (PTADSLHIGH). L-tyrosine is bound by residues Tyr-169 and Gln-173. A 'KMSKS' region motif is present at residues 230–234 (KFGKT). Lys-233 is an ATP binding site. Residues 352 to 418 (TVLIDLLVES…GKKKYFLIRY (67 aa)) form the S4 RNA-binding domain.

This sequence belongs to the class-I aminoacyl-tRNA synthetase family. TyrS type 1 subfamily. As to quaternary structure, homodimer.

The protein resides in the cytoplasm. The catalysed reaction is tRNA(Tyr) + L-tyrosine + ATP = L-tyrosyl-tRNA(Tyr) + AMP + diphosphate + H(+). Catalyzes the attachment of tyrosine to tRNA(Tyr) in a two-step reaction: tyrosine is first activated by ATP to form Tyr-AMP and then transferred to the acceptor end of tRNA(Tyr). In Bacillus anthracis, this protein is Tyrosine--tRNA ligase 1.